A 2339-amino-acid chain; its full sequence is Voltage-dependent N-type calcium channel subunit alpha-1B (2339 aa).

At 1–90 the chain is on the cytoplasmic side; sequence MVRFGDELGG…DNVVRKYAKR (90 aa). Over residues 15 to 34 the composition is skewed to gly residues; the sequence is AGGAERARGGGAGGAGGPGP. Positions 15–37 are disordered; the sequence is AGGAERARGGGAGGAGGPGPGGL. Omega-N-methylarginine is present on arginine 22. An I repeat occupies 82–359; the sequence is NVVRKYAKRI…LVLGVLSGEF (278 aa). Residues 91–114 form a helical membrane-spanning segment; it reads ITEWPPFEYMILATIIANCIVLAL. Residues 115 to 131 are Extracellular-facing; the sequence is EQHLPDGDKTPMSERLD. The chain crosses the membrane as a helical span at residues 132-152; the sequence is DTEPYFIGIFCFEAGIKILAL. Residues 153 to 163 lie on the Cytoplasmic side of the membrane; sequence GFVLHKGSYLR. A helical membrane pass occupies residues 164 to 182; that stretch reads NGWNVMDFVVVLTGILATA. At 183–187 the chain is on the extracellular side; it reads GTDFD. The chain crosses the membrane as a helical span at residues 188–211; that stretch reads LRTLRAVRVLRPLKLVSGIPSLQV. Topologically, residues 212-221 are cytoplasmic; sequence VLKSIMKAMV. Residues 222–244 traverse the membrane as a helical segment; that stretch reads PLLQIGLLLFFAILMFAIIGLEF. The Extracellular segment spans residues 245–331; the sequence is YMGKFHKACF…NTNDAAGNTW (87 aa). An N-linked (GlcNAc...) asparagine glycan is attached at asparagine 256. Residues 332–356 traverse the membrane as a helical segment; sequence NWLYFIPLIIIGSFFMLNLVLGVLS. The Cytoplasmic segment spans residues 357–483; sequence GEFAKERERV…FFIRRMVKAQ (127 aa). Residues 379–396 are binding to the beta subunit; that stretch reads QQIERELNGYLEWIFKAE. Serine 411 is modified (phosphoserine). 452 to 459 provides a ligand contact to ATP; it reads ASLKSGKT. The stretch at 469-713 is one II repeat; sequence EKMFRFFIRR…VFLAIAVDNL (245 aa). Residues 484 to 502 traverse the membrane as a helical segment; sequence SFYWTVLCVVALNTLCVAM. Topologically, residues 503–512 are extracellular; it reads VHYNQPQRLT. A helical transmembrane segment spans residues 513–535; it reads TALYFAEFVFLGLFLTEMSLKMY. Topologically, residues 536-545 are cytoplasmic; it reads GLGPRSYFRS. Serine 545 lines the a 1,2-diacyl-sn-glycero-3-phospho-(1D-myo-inositol-4,5-bisphosphate) pocket. Residues 546 to 567 form a helical membrane-spanning segment; sequence SFNCFDFGVIVGSIFEVVWAAV. Residues 568–574 are Extracellular-facing; that stretch reads KPGTSFG. Residues 575-587 traverse the membrane as a helical segment; the sequence is ISVLRALRLLRIF. A 1,2-diacyl-sn-glycero-3-phospho-(1D-myo-inositol-4,5-bisphosphate) is bound by residues arginine 585 and lysine 588. Topologically, residues 588-605 are cytoplasmic; the sequence is KVTKYWNSLRNLVVSLLN. Residues 606–631 form a helical membrane-spanning segment; the sequence is SMKSIISLLFLLFLFIVVFALLGMQL. Topologically, residues 632–683 are extracellular; that stretch reads FGGQFNFKDETPTTNFDTFPAAILTVFQILTGEDWNAVMYHGIESQGGVSRG. A helical transmembrane segment spans residues 684–710; it reads MFSSFYFIVLTLFGNYTLLNVFLAIAV. Topologically, residues 711–1156 are cytoplasmic; that stretch reads DNLANAQELT…CCHYIVTMRY (446 aa). Serine 746, serine 749, and serine 784 each carry phosphoserine. Composition is skewed to basic and acidic residues over residues 809–827, 870–891, 927–937, 973–984, and 999–1026; these read DVKT…RDAP, EQDR…EERG, GSPEEAAEREP, CPREAESSEEPA, and TAEK…RNHQ. Disordered regions lie at residues 809 to 1026 and 1056 to 1084; these read DVKT…RNHQ and VEEQ…TTVH. Residues 1066–1083 are compositionally biased toward polar residues; that stretch reads QRNVTRMGSQPPDTSTTV. A Phosphoserine modification is found at serine 1074. One copy of the III repeat lies at 1142–1424; the sequence is NLLRRCCHYI…IFVALIIITF (283 aa). The helical transmembrane segment at 1157 to 1175 threads the bilayer; sequence FEMVILVVIALSSIALAAE. Over 1176-1183 the chain is Extracellular; it reads DPVRTDSP. A helical transmembrane segment spans residues 1184-1208; the sequence is RNNALKYMDYIFTGVFTFEMVIKMI. Residues 1209–1222 lie on the Cytoplasmic side of the membrane; it reads DLGLLLHPGAYFRD. The helical transmembrane segment at 1223–1243 threads the bilayer; it reads LWNILDFIVVSGALVAFAFSG. Over 1244 to 1249 the chain is Extracellular; sequence SKGKDI. A helical membrane pass occupies residues 1250–1270; sequence STIKSLRVLRVLRPLKTIKRL. Residues 1271–1288 lie on the Cytoplasmic side of the membrane; it reads PKLKAVFDCVVNSLKNVL. A helical membrane pass occupies residues 1289-1308; that stretch reads NILIVYMLFMFIFAVIAVQL. Topologically, residues 1309–1395 are extracellular; it reads FKGKFFYCTD…EQGPSPGYRM (87 aa). The helical transmembrane segment at 1396-1421 threads the bilayer; the sequence is ELSIFYVVYFVVFPFFFVNIFVALII. The Cytoplasmic segment spans residues 1422-1476; it reads ITFQEQGDKVMSECSLEKNERACIDFAISARPLTRYMPQNKQSFQYKTWTFVVSP. One copy of the IV repeat lies at 1461 to 1714; it reads NKQSFQYKTW…LFVAVIMDNF (254 aa). Residues 1477-1495 traverse the membrane as a helical segment; it reads PFEYFIMAMIALNTVVLMM. Residues 1496–1503 lie on the Extracellular side of the membrane; that stretch reads KFYDAPYE. Residues 1504-1528 form a helical membrane-spanning segment; the sequence is YELMLKCLNIVFTSMFSMECVLKII. Over 1529-1538 the chain is Cytoplasmic; the sequence is AFGVLNYFRD. A helical membrane pass occupies residues 1539-1560; the sequence is AWNVFDFVTVLGSITDILVTEI. At 1561 to 1566 the chain is on the extracellular side; the sequence is ANNFIN. Asparagine 1566 carries N-linked (GlcNAc...) asparagine glycosylation. Residues 1567–1585 traverse the membrane as a helical segment; the sequence is LSFLRLFRAARLIKLLRQG. At 1586–1604 the chain is on the cytoplasmic side; that stretch reads YTIRILLWTFVQSFKALPY. The helical transmembrane segment at 1605–1624 threads the bilayer; the sequence is VCLLIAMLFFIYAIIGMQVF. Residues 1625–1686 are Extracellular-facing; it reads GNIALDDDTS…SNASECGSDF (62 aa). N-linked (GlcNAc...) asparagine glycosylation occurs at asparagine 1678. A helical transmembrane segment spans residues 1687–1710; that stretch reads AYFYFVSFIFLCSFLMLNLFVAVI. Topologically, residues 1711-2339 are cytoplasmic; sequence MDNFEYLTRD…CHHPDRDRRC (629 aa). In terms of domain architecture, EF-hand spans 1727 to 1762; sequence HHLDEFIRVWAEYDPAACGRISYSDMFEMLKHMSPP. Ca(2+)-binding residues include aspartate 1740, arginine 1746, and aspartate 1751. The interval 1983–2312 is disordered; sequence TLSGPDAEPQ…QPPPLRRVPN (330 aa). The span at 2050–2064 shows a compositional bias: basic residues; it reads PHHHHHRCHRRRDRK. Residue serine 2067 is modified to Phosphoserine. Positions 2099 to 2136 are enriched in basic and acidic residues; that stretch reads CRRERERRQERGRSQERRQPSSSSSEKHRFYSCDRFGG. Composition is skewed to polar residues over residues 2144 to 2155 and 2165 to 2181; these read PSLSSHPTSPTA and GSGS…SGAS. Phosphoserine occurs at positions 2224, 2233, and 2256. Positions 2286–2302 are enriched in low complexity; the sequence is SNSGRSSRTSYVSSLTS.

It belongs to the calcium channel alpha-1 subunit (TC 1.A.1.11) family. CACNA1B subfamily. As to quaternary structure, multisubunit complex consisting of alpha-1, alpha-2, beta and delta subunits in a 1:1:1:1 ratio. The channel activity is directed by the pore-forming and voltage-sensitive alpha-1 subunit. In many cases, this subunit is sufficient to generate voltage-sensitive calcium channel activity. The auxiliary subunits beta and alpha-2/delta linked by a disulfide bridge regulate the channel activity. Interacts with RIMS1. Interacts with FMR1 (via C-terminus); this interaction induces a decrease in the number of presynaptic functional CACNA1B channels at the cell surface. In terms of processing, phosphorylated in vitro by CaM-kinase II, PKA, PKC and CGPK. In terms of tissue distribution, widespread expression throughout the brain. Highest levels in corpus striatum and midbrain.

Its subcellular location is the membrane. It catalyses the reaction Ca(2+)(in) = Ca(2+)(out). Its activity is regulated as follows. Is specifically blocked by omega-conotoxin GVIA. Is specifically blocked by omega-conotoxin MVIIA (ziconotide). Is insensitive to dihydropyridines (DHP). Voltage-sensitive calcium channels (VSCC) mediate the entry of calcium ions into excitable cells and are also involved in a variety of calcium-dependent processes, including muscle contraction, hormone or neurotransmitter release, gene expression, cell motility, cell division and cell death. This alpha-1B subunit gives rise to N-type calcium currents. N-type calcium channels belong to the 'high-voltage activated' (HVA) group. They are involved in pain signaling. Calcium channels containing alpha-1B subunit may play a role in directed migration of immature neurons. Mediates Ca(2+) release probability at hippocampal neuronal soma and synaptic terminals. This is Voltage-dependent N-type calcium channel subunit alpha-1B (CACNA1B) from Oryctolagus cuniculus (Rabbit).